Here is a 257-residue protein sequence, read N- to C-terminus: Pyridoxine 5'-phosphate synthase (257 aa).

Residue asparagine 6 participates in 3-amino-2-oxopropyl phosphate binding. 8–9 (DH) provides a ligand contact to 1-deoxy-D-xylulose 5-phosphate. Arginine 17 is a 3-amino-2-oxopropyl phosphate binding site. The active-site Proton acceptor is histidine 41. The 1-deoxy-D-xylulose 5-phosphate site is built by arginine 43 and histidine 48. Catalysis depends on glutamate 68, which acts as the Proton acceptor. 1-deoxy-D-xylulose 5-phosphate is bound at residue threonine 98. Histidine 210 serves as the catalytic Proton donor. Residues glycine 211 and 232-233 (GQ) each bind 3-amino-2-oxopropyl phosphate.

Belongs to the PNP synthase family. Homooctamer; tetramer of dimers.

It localises to the cytoplasm. It catalyses the reaction 3-amino-2-oxopropyl phosphate + 1-deoxy-D-xylulose 5-phosphate = pyridoxine 5'-phosphate + phosphate + 2 H2O + H(+). It functions in the pathway cofactor biosynthesis; pyridoxine 5'-phosphate biosynthesis; pyridoxine 5'-phosphate from D-erythrose 4-phosphate: step 5/5. Catalyzes the complicated ring closure reaction between the two acyclic compounds 1-deoxy-D-xylulose-5-phosphate (DXP) and 3-amino-2-oxopropyl phosphate (1-amino-acetone-3-phosphate or AAP) to form pyridoxine 5'-phosphate (PNP) and inorganic phosphate. This chain is Pyridoxine 5'-phosphate synthase, found in Campylobacter jejuni subsp. jejuni serotype O:6 (strain 81116 / NCTC 11828).